A 107-amino-acid polypeptide reads, in one-letter code: EPIDERMAL PATTERNING FACTOR-like protein 3 (107 aa).

The first 24 residues, 1–24 (MEYMFLLMSKFFFVFPIIIYIGPA), serve as a signal peptide directing secretion. Intrachain disulfides connect Cys64–Cys102, Cys68–Cys74, and Cys71–Cys104.

The protein belongs to the plant cysteine rich small secretory peptide family. Epidermal patterning factor subfamily.

It is found in the secreted. Functionally, controls stomatal patterning. This chain is EPIDERMAL PATTERNING FACTOR-like protein 3, found in Arabidopsis thaliana (Mouse-ear cress).